The chain runs to 430 residues: Adenylosuccinate synthetase (430 aa).

GTP contacts are provided by residues G17–K23 and G45–T47. Residue D18 is the Proton acceptor of the active site. 2 residues coordinate Mg(2+): D18 and G45. IMP contacts are provided by residues D18–K21, N43–H46, T139, R153, N229, T244, and R308. H46 serves as the catalytic Proton donor. T304–R310 is a substrate binding site. Residues R310, K336–D338, and G418–G420 contribute to the GTP site.

This sequence belongs to the adenylosuccinate synthetase family. Homodimer. Mg(2+) is required as a cofactor.

It is found in the cytoplasm. The catalysed reaction is IMP + L-aspartate + GTP = N(6)-(1,2-dicarboxyethyl)-AMP + GDP + phosphate + 2 H(+). The protein operates within purine metabolism; AMP biosynthesis via de novo pathway; AMP from IMP: step 1/2. Plays an important role in the de novo pathway and in the salvage pathway of purine nucleotide biosynthesis. Catalyzes the first committed step in the biosynthesis of AMP from IMP. The protein is Adenylosuccinate synthetase of Cryptococcus neoformans var. neoformans serotype D (strain B-3501A) (Filobasidiella neoformans).